The chain runs to 357 residues: Probable glutamine amidotransferase DUG3 (357 aa).

Residue cysteine 2 is the For GATase activity of the active site. The Glutamine amidotransferase type-2 domain occupies 2-260 (CRFLIFKGKQ…PGEYRVERLD (259 aa)).

It belongs to the DUG3 family. Component of the GSH degradosomal complex composed of at least DUG1, DUG2 and DUG3.

Its subcellular location is the cytoplasm. In terms of biological role, component of the GSH degradosomal complex involved in the degradation of glutathione (GSH) and other peptides containing a gamma-glu-X bond. The protein is Probable glutamine amidotransferase DUG3 (DUG3) of Saccharomyces cerevisiae (strain ATCC 204508 / S288c) (Baker's yeast).